Reading from the N-terminus, the 470-residue chain is Desmin (470 aa).

Residues 2–108 form a head region; the sequence is SQAYSSSQRV…QEFLTTRTNE (107 aa). Residue S7 is modified to Phosphoserine; by CDK1. S12 is subject to Phosphoserine; by AURKB. An Omega-N-methylarginine modification is found at R16. The residue at position 17 (T17) is a Phosphothreonine; by AURKB and ROCK1. S28 is modified (phosphoserine; by CDK1). S31 bears the Phosphoserine mark. Phosphoserine; by CDK1 is present on S32. R37 carries the post-translational modification Asymmetric dimethylarginine; alternate. At R37 the chain carries Omega-N-methylarginine; alternate. S45 is subject to Phosphoserine. ADP-ribosylarginine is present on R58. A Phosphoserine; by AURKB modification is found at S60. Omega-N-methylarginine is present on R70. The residue at position 77 (T77) is a Phosphothreonine; by ROCK1. Phosphoserine is present on S81. In terms of domain architecture, IF rod spans 108–416; that stretch reads EKVELQELND…KLLEGEESRI (309 aa). The interval 109-141 is coil 1A; the sequence is KVELQELNDRFANYIEKVRFLEQQNAALAAEVN. A linker 1 region spans residues 142 to 151; that stretch reads RLKGREPTRV. A coil 1B region spans residues 152 to 252; the sequence is AEIYEEELRE…HEEEIRELQA (101 aa). The linker 12 stretch occupies residues 253–268; sequence QLQEQQVQVEMDMSKP. Residues 268 to 415 form an interaction with NEB region; the sequence is PDLTAALRDI…RKLLEGEESR (148 aa). Positions 269 to 287 are coil 2A; that stretch reads DLTAALRDIRAQYETIAAK. The linker 2 stretch occupies residues 288–295; the sequence is NISEAEEW. Phosphoserine occurs at positions 290, 358, 361, and 424. The coil 2B stretch occupies residues 296 to 412; that stretch reads YKSKVSDLTQ…ATYRKLLEGE (117 aa). Residues 413–470 form a tail region; that stretch reads ESRINLPIQTFSALNFRETSPEQRGSEVHTKKTVMIKTIETRDGEVVSEATQQQHEVL. Residues 438-453 form an interaction with CRYAB region; sequence SEVHTKKTVMIKTIET.

Belongs to the intermediate filament family. As to quaternary structure, homomer. Interacts with DST. Interacts with MTM1. Interacts with EPPK1; interaction is dependent of higher-order structure of intermediate filament. Interacts with CRYAB. Interacts with NEB (via nebulin repeats 160-164). Interacts (via rod region) with NEBL (via nebulin repeats 1-5). Interacts with ASB2; the interaction targets DES for proteasomal degradation. Interacts with PKP1. Interacts with FLII. Post-translationally, ADP-ribosylation prevents ability to form intermediate filaments. Phosphorylation at Ser-7, Ser-28 and Ser-32 by CDK1 and phosphorylation at Ser-60 by AURKB contribute to efficient separation of desmin intermediate filaments during mitosis. In terms of processing, ubiquitination by a SCF-like complex containing ASB2 leads to proteasomal degradation.

It is found in the cytoplasm. The protein localises to the myofibril. The protein resides in the sarcomere. It localises to the z line. Its subcellular location is the cell membrane. It is found in the sarcolemma. The protein localises to the nucleus. The protein resides in the cell tip. It localises to the nucleus envelope. Functionally, muscle-specific type III intermediate filament essential for proper muscular structure and function. Plays a crucial role in maintaining the structure of sarcomeres, inter-connecting the Z-disks and forming the myofibrils, linking them not only to the sarcolemmal cytoskeleton, but also to the nucleus and mitochondria, thus providing strength for the muscle fiber during activity. In adult striated muscle they form a fibrous network connecting myofibrils to each other and to the plasma membrane from the periphery of the Z-line structures. May act as a sarcomeric microtubule-anchoring protein: specifically associates with detyrosinated tubulin-alpha chains, leading to buckled microtubules and mechanical resistance to contraction. Required for nuclear membrane integrity, via anchoring at the cell tip and nuclear envelope, resulting in maintenance of microtubule-derived intracellular mechanical forces. Contributes to the transcriptional regulation of the NKX2-5 gene in cardiac progenitor cells during a short period of cardiomyogenesis and in cardiac side population stem cells in the adult. Plays a role in maintaining an optimal conformation of nebulette (NEB) on heart muscle sarcomeres to bind and recruit cardiac alpha-actin. The sequence is that of Desmin (DES) from Bos taurus (Bovine).